Reading from the N-terminus, the 219-residue chain is ATP-dependent Clp protease proteolytic subunit (219 aa).

The active-site Nucleophile is the S101. H126 is an active-site residue.

This sequence belongs to the peptidase S14 family. Component of the chloroplastic Clp protease core complex.

Its subcellular location is the plastid. It localises to the chloroplast stroma. The catalysed reaction is Hydrolysis of proteins to small peptides in the presence of ATP and magnesium. alpha-casein is the usual test substrate. In the absence of ATP, only oligopeptides shorter than five residues are hydrolyzed (such as succinyl-Leu-Tyr-|-NHMec, and Leu-Tyr-Leu-|-Tyr-Trp, in which cleavage of the -Tyr-|-Leu- and -Tyr-|-Trp bonds also occurs).. Functionally, cleaves peptides in various proteins in a process that requires ATP hydrolysis. Has a chymotrypsin-like activity. Plays a major role in the degradation of misfolded proteins. This is ATP-dependent Clp protease proteolytic subunit from Chara vulgaris (Common stonewort).